We begin with the raw amino-acid sequence, 447 residues long: MDNHPWLPNISRIKDMLREIGVDDVEQLFQDVPRDLILRRELKVGYDSPLPEEDIRWRLNQVAERNLKLRYPPFLGAGAYPHSIPSVIRFILSRSEFYTAYTPYQPEVNQGLLQGLFEYQSLMAELLEMDVVNSSHYDWGGSLAEAVLMGYRINGKRKVVIPESINPLHEEVLRTWVSGRELEVVKIPVGKDGKIDLDFLSSLNSDEISSIYIQQPNFFGVVETELEYVTDWARKNNVVSIMGVSPLSLGLIKTPGELGFDIAVGDGQELGIPLNFGGPYSGILATRMDMKLVRQMPGRIVGMTQDSQGRRGFTLILQTREQFARREKATSNITTNEALIALANAVYLSLLGKEGIRELATEIYKRSHYALKRMEDEELGKRKWESDFFEEFTFVFRSDYDRIHSELLRRGIHGGLRLGPREALFCVTEVHTKRAIDDLVNAMKEVA.

Belongs to the GcvP family. N-terminal subunit subfamily. In terms of assembly, the glycine cleavage system is composed of four proteins: P, T, L and H. In this organism, the P 'protein' is a heterodimer of two subunits.

The catalysed reaction is N(6)-[(R)-lipoyl]-L-lysyl-[glycine-cleavage complex H protein] + glycine + H(+) = N(6)-[(R)-S(8)-aminomethyldihydrolipoyl]-L-lysyl-[glycine-cleavage complex H protein] + CO2. Its function is as follows. The glycine cleavage system catalyzes the degradation of glycine. The P protein binds the alpha-amino group of glycine through its pyridoxal phosphate cofactor; CO(2) is released and the remaining methylamine moiety is then transferred to the lipoamide cofactor of the H protein. This Metallosphaera sedula (strain ATCC 51363 / DSM 5348 / JCM 9185 / NBRC 15509 / TH2) protein is Probable glycine dehydrogenase (decarboxylating) subunit 1.